The following is a 421-amino-acid chain: Replication factor C large subunit (421 aa).

Glycine 63 to threonine 70 is an ATP binding site.

This sequence belongs to the activator 1 small subunits family. RfcL subfamily. In terms of assembly, heteromultimer composed of small subunits (RfcS) and large subunits (RfcL).

Its function is as follows. Part of the RFC clamp loader complex which loads the PCNA sliding clamp onto DNA. This chain is Replication factor C large subunit, found in Pyrobaculum calidifontis (strain DSM 21063 / JCM 11548 / VA1).